A 276-amino-acid polypeptide reads, in one-letter code: Undecaprenyl-diphosphatase 1 (276 aa).

Transmembrane regions (helical) follow at residues 44-63, 85-105, 109-129, 183-203, 214-234, and 249-269; these read ALAF…IWEY, VNLL…ADLI, LFNP…MLWA, AATE…AVYS, GDFA…MLAV, and FAWY…LGMI.

Belongs to the UppP family.

Its subcellular location is the cell inner membrane. The catalysed reaction is di-trans,octa-cis-undecaprenyl diphosphate + H2O = di-trans,octa-cis-undecaprenyl phosphate + phosphate + H(+). Its function is as follows. Catalyzes the dephosphorylation of undecaprenyl diphosphate (UPP). Confers resistance to bacitracin. The chain is Undecaprenyl-diphosphatase 1 from Stutzerimonas stutzeri (strain A1501) (Pseudomonas stutzeri).